A 65-amino-acid chain; its full sequence is Small ribosomal subunit protein eS31 (65 aa).

C36, C39, C55, and C58 together coordinate Zn(2+). The segment at 36–58 adopts a C4-type zinc-finger fold; that stretch reads CPKCGSVMAFHREPVPRWHCGKC.

This sequence belongs to the eukaryotic ribosomal protein eS31 family. As to quaternary structure, part of the 30S ribosomal subunit. Zn(2+) serves as cofactor.

The sequence is that of Small ribosomal subunit protein eS31 from Pyrobaculum calidifontis (strain DSM 21063 / JCM 11548 / VA1).